Reading from the N-terminus, the 357-residue chain is Actin, cytoplasmic (357 aa).

This sequence belongs to the actin family. Post-translationally, met-1 may be removed after translation.

The protein localises to the cytoplasm. Its subcellular location is the cytoskeleton. The enzyme catalyses ATP + H2O = ADP + phosphate + H(+). Functionally, actins are highly conserved proteins that are involved in various types of cell motility and are ubiquitously expressed in all eukaryotic cells. This Oxytricha fallax protein is Actin, cytoplasmic.